Consider the following 452-residue polypeptide: Exodeoxyribonuclease 7 large subunit (452 aa).

Belongs to the XseA family. As to quaternary structure, heterooligomer composed of large and small subunits.

It is found in the cytoplasm. The catalysed reaction is Exonucleolytic cleavage in either 5'- to 3'- or 3'- to 5'-direction to yield nucleoside 5'-phosphates.. Functionally, bidirectionally degrades single-stranded DNA into large acid-insoluble oligonucleotides, which are then degraded further into small acid-soluble oligonucleotides. The sequence is that of Exodeoxyribonuclease 7 large subunit from Bacillus mycoides (strain KBAB4) (Bacillus weihenstephanensis).